Consider the following 176-residue polypeptide: ATP-dependent protease subunit HslV (176 aa).

Thr-2 is a catalytic residue. 3 residues coordinate Na(+): Gly-157, Cys-160, and Thr-163.

It belongs to the peptidase T1B family. HslV subfamily. A double ring-shaped homohexamer of HslV is capped on each side by a ring-shaped HslU homohexamer. The assembly of the HslU/HslV complex is dependent on binding of ATP.

The protein resides in the cytoplasm. It catalyses the reaction ATP-dependent cleavage of peptide bonds with broad specificity.. Its activity is regulated as follows. Allosterically activated by HslU binding. In terms of biological role, protease subunit of a proteasome-like degradation complex believed to be a general protein degrading machinery. The protein is ATP-dependent protease subunit HslV of Pseudomonas fluorescens (strain ATCC BAA-477 / NRRL B-23932 / Pf-5).